Here is a 906-residue protein sequence, read N- to C-terminus: Inter-alpha-trypsin inhibitor heavy chain H1 (906 aa).

Positions 1–22 (MGLRGLLCVCLVSLLALQAVAA) are cleaved as a signal peptide. The propeptide occupies 23 to 29 (QGSPTRN). The VIT domain occupies 32–161 (GGKKRMAVDA…KATFRLTYEE (130 aa)). C55 carries S-linked (Hex...) cysteine glycosylation. S124 carries the post-translational modification Phosphoserine. Residues 287–470 (NVVFVIDISS…QQLQGFYEQV (184 aa)) enclose the VWFA domain. Phosphothreonine is present on residues T397 and T402. N-linked (GlcNAc...) asparagine glycosylation is present at N583. The O-linked (GalNAc...) serine glycan is linked to S643. A glycan (O-linked (GalNAc...) threonine) is linked at T648. D667 carries the aspartate 1-(chondroitin 4-sulfate)-ester modification. Residues 668–906 (PHFLIHVPQK…HTDYIVPDIF (239 aa)) constitute a propeptide that is removed on maturation. N745 carries N-linked (GlcNAc...) asparagine glycosylation.

The protein belongs to the ITIH family. I-alpha-I plasma protease inhibitors are assembled from one or two heavy chains (HC) and one light chain, bikunin. Inter-alpha-inhibitor (I-alpha-I) is composed of ITIH1/HC1, ITIH2/HC2 and bikunin. Interacts with TNFAIP6 (via Link and CUB domains). In terms of processing, heavy chains are linked to bikunin via chondroitin 4-sulfate esterified to the alpha-carboxyl of the C-terminal aspartate after propeptide cleavage. The S-linked glycan is composed of two 6-carbon sugars, possibly Glc or Gal.

It localises to the secreted. Functionally, may act as a carrier of hyaluronan in serum or as a binding protein between hyaluronan and other matrix protein, including those on cell surfaces in tissues to regulate the localization, synthesis and degradation of hyaluronan which are essential to cells undergoing biological processes. This chain is Inter-alpha-trypsin inhibitor heavy chain H1 (ITIH1), found in Bos taurus (Bovine).